Consider the following 661-residue polypeptide: Fusaric acid cluster transcription factor FUB12 (661 aa).

Residues 17-48 constitute a DNA-binding region (zn(2)-C6 fungal-type); sequence CVPCRTRKIKCNAAVVGLPCGSCVSRECPDEC. Disordered stretches follow at residues 56–132 and 151–184; these read RTVK…PPGQ and SAAQ…PQLD. Polar residues predominate over residues 73-98; that stretch reads PDTNGSVLSPRQQQLPTNVSRQATDS. The span at 99–109 shows a compositional bias: basic and acidic residues; sequence SHSDPVEESIH. Residues 110-119 are compositionally biased toward polar residues; that stretch reads ASHTGSSLRN. A compositionally biased stretch (basic and acidic residues) spans 120–129; that stretch reads DTPHSRDRRP.

The protein resides in the nucleus. Functionally, transcription factor that is involved in the formation of the two Fusaric acid derivatives, dehydrofusaric acid and fusarinolic acid, serving as a detoxification mechanism. The protein is Fusaric acid cluster transcription factor FUB12 of Gibberella moniliformis (strain M3125 / FGSC 7600) (Maize ear and stalk rot fungus).